Consider the following 288-residue polypeptide: ATP synthase gamma chain (288 aa).

It belongs to the ATPase gamma chain family. As to quaternary structure, F-type ATPases have 2 components, CF(1) - the catalytic core - and CF(0) - the membrane proton channel. CF(1) has five subunits: alpha(3), beta(3), gamma(1), delta(1), epsilon(1). CF(0) has three main subunits: a, b and c.

It localises to the cell inner membrane. Its function is as follows. Produces ATP from ADP in the presence of a proton gradient across the membrane. The gamma chain is believed to be important in regulating ATPase activity and the flow of protons through the CF(0) complex. The protein is ATP synthase gamma chain of Rickettsia canadensis (strain McKiel).